Reading from the N-terminus, the 637-residue chain is Penicillin-binding protein 1A (637 aa).

The segment at 62 to 224 (LIADLGSERR…NQYDPYSHPE (163 aa)) is transglycosylase. E91 serves as the catalytic Proton donor; for transglycosylase activity. Residues 298–612 (EVYTNVDSKV…RLTPIVGDGF (315 aa)) form a transpeptidase region. S371 acts as the Acyl-ester intermediate; for transpeptidase activity in catalysis.

It in the N-terminal section; belongs to the glycosyltransferase 51 family. This sequence in the C-terminal section; belongs to the transpeptidase family.

It localises to the secreted. It carries out the reaction [GlcNAc-(1-&gt;4)-Mur2Ac(oyl-L-Ala-gamma-D-Glu-L-Lys-D-Ala-D-Ala)](n)-di-trans,octa-cis-undecaprenyl diphosphate + beta-D-GlcNAc-(1-&gt;4)-Mur2Ac(oyl-L-Ala-gamma-D-Glu-L-Lys-D-Ala-D-Ala)-di-trans,octa-cis-undecaprenyl diphosphate = [GlcNAc-(1-&gt;4)-Mur2Ac(oyl-L-Ala-gamma-D-Glu-L-Lys-D-Ala-D-Ala)](n+1)-di-trans,octa-cis-undecaprenyl diphosphate + di-trans,octa-cis-undecaprenyl diphosphate + H(+). It catalyses the reaction Preferential cleavage: (Ac)2-L-Lys-D-Ala-|-D-Ala. Also transpeptidation of peptidyl-alanyl moieties that are N-acyl substituents of D-alanine.. Its pathway is cell wall biogenesis; peptidoglycan biosynthesis. In terms of biological role, cell wall formation. The sequence is that of Penicillin-binding protein 1A (ponA) from Streptococcus oralis.